The primary structure comprises 94 residues: Small ribosomal subunit protein uS19 (94 aa).

It belongs to the universal ribosomal protein uS19 family.

Functionally, protein S19 forms a complex with S13 that binds strongly to the 16S ribosomal RNA. In Dictyoglomus thermophilum (strain ATCC 35947 / DSM 3960 / H-6-12), this protein is Small ribosomal subunit protein uS19.